A 360-amino-acid chain; its full sequence is Phospho-N-acetylmuramoyl-pentapeptide-transferase (360 aa).

10 helical membrane-spanning segments follow: residues 25–45 (RGIL…PWMI), 73–93 (TMGG…WADL), 97–117 (YVWV…VDDY), 134–154 (YFWQ…TAPT), 168–188 (LAIP…VGSS), 199–219 (GLAI…CYLS), 236–256 (AGEL…FLWF), 263–283 (VFMG…IAVI), 288–308 (VVLF…VIQV), and 338–358 (VIVR…ATLK).

Belongs to the glycosyltransferase 4 family. MraY subfamily. The cofactor is Mg(2+).

It localises to the cell inner membrane. It catalyses the reaction UDP-N-acetyl-alpha-D-muramoyl-L-alanyl-gamma-D-glutamyl-meso-2,6-diaminopimeloyl-D-alanyl-D-alanine + di-trans,octa-cis-undecaprenyl phosphate = di-trans,octa-cis-undecaprenyl diphospho-N-acetyl-alpha-D-muramoyl-L-alanyl-D-glutamyl-meso-2,6-diaminopimeloyl-D-alanyl-D-alanine + UMP. It functions in the pathway cell wall biogenesis; peptidoglycan biosynthesis. In terms of biological role, catalyzes the initial step of the lipid cycle reactions in the biosynthesis of the cell wall peptidoglycan: transfers peptidoglycan precursor phospho-MurNAc-pentapeptide from UDP-MurNAc-pentapeptide onto the lipid carrier undecaprenyl phosphate, yielding undecaprenyl-pyrophosphoryl-MurNAc-pentapeptide, known as lipid I. The polypeptide is Phospho-N-acetylmuramoyl-pentapeptide-transferase (Pseudomonas entomophila (strain L48)).